A 275-amino-acid polypeptide reads, in one-letter code: Exosome complex component Rrp42 (275 aa).

It belongs to the RNase PH family. Rrp42 subfamily. In terms of assembly, component of the archaeal exosome complex. Forms a hexameric ring-like arrangement composed of 3 Rrp41-Rrp42 heterodimers. The hexameric ring associates with a trimer of Rrp4 and/or Csl4 subunits.

The protein resides in the cytoplasm. In terms of biological role, non-catalytic component of the exosome, which is a complex involved in RNA degradation. Contributes to the structuring of the Rrp41 active site. This chain is Exosome complex component Rrp42, found in Saccharolobus islandicus (strain M.16.27) (Sulfolobus islandicus).